The primary structure comprises 200 residues: NADH-quinone oxidoreductase subunit C (200 aa).

Belongs to the complex I 30 kDa subunit family. In terms of assembly, NDH-1 is composed of 14 different subunits. Subunits NuoB, C, D, E, F, and G constitute the peripheral sector of the complex.

Its subcellular location is the cell inner membrane. It carries out the reaction a quinone + NADH + 5 H(+)(in) = a quinol + NAD(+) + 4 H(+)(out). NDH-1 shuttles electrons from NADH, via FMN and iron-sulfur (Fe-S) centers, to quinones in the respiratory chain. The immediate electron acceptor for the enzyme in this species is believed to be ubiquinone. Couples the redox reaction to proton translocation (for every two electrons transferred, four hydrogen ions are translocated across the cytoplasmic membrane), and thus conserves the redox energy in a proton gradient. The sequence is that of NADH-quinone oxidoreductase subunit C from Thiobacillus denitrificans (strain ATCC 25259 / T1).